An 82-amino-acid polypeptide reads, in one-letter code: Cytochrome b559 subunit alpha (82 aa).

Residues 21–35 (VIHSITIPALFIAGW) form a helical membrane-spanning segment. His-23 lines the heme pocket.

It belongs to the PsbE/PsbF family. In terms of assembly, heterodimer of an alpha subunit and a beta subunit. PSII is composed of 1 copy each of membrane proteins PsbA, PsbB, PsbC, PsbD, PsbE, PsbF, PsbH, PsbI, PsbJ, PsbK, PsbL, PsbM, PsbT, PsbX, PsbY, PsbZ, Psb30/Ycf12, peripheral proteins PsbO, CyanoQ (PsbQ), PsbU, PsbV and a large number of cofactors. It forms dimeric complexes. Requires heme b as cofactor.

It localises to the cellular thylakoid membrane. Functionally, this b-type cytochrome is tightly associated with the reaction center of photosystem II (PSII). PSII is a light-driven water:plastoquinone oxidoreductase that uses light energy to abstract electrons from H(2)O, generating O(2) and a proton gradient subsequently used for ATP formation. It consists of a core antenna complex that captures photons, and an electron transfer chain that converts photonic excitation into a charge separation. The chain is Cytochrome b559 subunit alpha from Nostoc sp. (strain PCC 7120 / SAG 25.82 / UTEX 2576).